A 664-amino-acid polypeptide reads, in one-letter code: Glycine--tRNA ligase beta subunit (664 aa).

This sequence belongs to the class-II aminoacyl-tRNA synthetase family. Tetramer of two alpha and two beta subunits.

It is found in the cytoplasm. The catalysed reaction is tRNA(Gly) + glycine + ATP = glycyl-tRNA(Gly) + AMP + diphosphate. In Rickettsia typhi (strain ATCC VR-144 / Wilmington), this protein is Glycine--tRNA ligase beta subunit.